The following is a 417-amino-acid chain: Serine hydroxymethyltransferase (417 aa).

(6S)-5,6,7,8-tetrahydrofolate is bound by residues Leu121 and Gly125–Leu127. Lys229 is subject to N6-(pyridoxal phosphate)lysine. Ser355 to Phe357 contributes to the (6S)-5,6,7,8-tetrahydrofolate binding site.

It belongs to the SHMT family. As to quaternary structure, homodimer. It depends on pyridoxal 5'-phosphate as a cofactor.

It localises to the cytoplasm. The catalysed reaction is (6R)-5,10-methylene-5,6,7,8-tetrahydrofolate + glycine + H2O = (6S)-5,6,7,8-tetrahydrofolate + L-serine. The protein operates within one-carbon metabolism; tetrahydrofolate interconversion. Its pathway is amino-acid biosynthesis; glycine biosynthesis; glycine from L-serine: step 1/1. Catalyzes the reversible interconversion of serine and glycine with tetrahydrofolate (THF) serving as the one-carbon carrier. This reaction serves as the major source of one-carbon groups required for the biosynthesis of purines, thymidylate, methionine, and other important biomolecules. Also exhibits THF-independent aldolase activity toward beta-hydroxyamino acids, producing glycine and aldehydes, via a retro-aldol mechanism. The protein is Serine hydroxymethyltransferase of Stenotrophomonas maltophilia (strain K279a).